Reading from the N-terminus, the 1163-residue chain is Voltage-gated inwardly rectifying potassium channel KCNH2 (1163 aa).

The Cytoplasmic portion of the chain corresponds to Met1 to Tyr405. Residues Thr17 to Gly88 enclose the PAS domain. The region spanning Arg92–Asp144 is the PAC domain. The interval Val235–Ser286 is disordered. A phosphoserine mark is found at Ser239 and Ser245. A compositionally biased stretch (polar residues) spans Arg254–Arg271. Residues Ser285, Ser286, Ser322, and Ser353 each carry the phosphoserine modification. A helical transmembrane segment spans residues Ser406–Phe426. Over Thr427–Gln452 the chain is Extracellular. Residues Pro453–Phe473 traverse the membrane as a helical segment. The Cytoplasmic segment spans residues Arg474–Lys497. The chain crosses the membrane as a helical span at residues Gly498–Gly518. At Ser519–Leu522 the chain is on the extracellular side. Residues Ile523–Arg543 form a helical; Voltage-sensor membrane-spanning segment. Topologically, residues Tyr544–Ala549 are cytoplasmic. Residues Ala550–Trp570 form a helical membrane-spanning segment. The Extracellular portion of the chain corresponds to Tyr571–Tyr613. N-linked (GlcNAc...) asparagine glycosylation occurs at Asn600. An intramembrane region (pore-forming) is located at residues Val614–Pro634. The Selectivity filter signature appears at Ser626–Asn631. Topologically, residues Asn635–Lys640 are extracellular. A helical membrane pass occupies residues Ile641–Val661. The Cytoplasmic segment spans residues Ser662–Ser1163. The cNMP-binding domain stretch occupies residues Pro744–Leu844. Phosphoserine is present on residues Ser873 and Ser876. 3 disordered regions span residues Ser873–Ser992, Glu1015–Glu1043, and Ala1126–Ser1163. Over residues Arg885 to Arg894 the composition is skewed to basic residues. The segment covering Gly932–Glu943 has biased composition (low complexity). Arg1018 is modified (omega-N-methylarginine). Residues Arg1039–Thr1066 adopt a coiled-coil conformation. At Ser1141 the chain carries Phosphoserine.

The protein belongs to the potassium channel family. H (Eag) (TC 1.A.1.20) subfamily. Kv11.1/KCNH2 sub-subfamily. In terms of assembly, the potassium channel is probably composed of a homo- or heterotetrameric complex of pore-forming alpha subunits that can associate with modulating beta subunits. Interacts with DNAJB12 and DNAJB14; chaperones DNAJB12 and DNAJB14 promote tetramerization. Heteromultimer with KCNH6/ERG2 and KCNH7/ERG3. Interacts with ALG10B. Forms a stable complex with KCNE1 or KCNE2, and that this heteromultimerization regulates Inward rectifier potassium channel activity. Interacts with CANX. The core-glycosylated, but not the fully glycosylated form interacts with RNF207. Interacts with NDFIP1 and NDFIP2; this interaction decreases the cell membrane expression by targeting KCNH2, through interaction with NEDD4L, for the degradation through the multivesicular bodies (MVBs)-lysosomal pathway. Phosphorylated on serine and threonine residues. Phosphorylation by PKA inhibits ion conduction. In terms of tissue distribution, highly expressed in brain and testis, slightly less so in heart, adrenal, retina and thymus. Detected at lower levels in lung, soleus, tibialis, and at very low levels in cornea and lens. A shorter transcript is detected in skeletal muscle. Found in pituitary.

The protein localises to the cell membrane. The catalysed reaction is K(+)(in) = K(+)(out). In terms of biological role, pore-forming (alpha) subunit of voltage-gated inwardly rectifying potassium channel. Characterized by unusual gating kinetics by producing relatively small outward currents during membrane depolarization and large inward currents during subsequent repolarization which reflect a rapid inactivation during depolarization and quick recovery from inactivation but slow deactivation (closing) during repolarization. Channel properties are modulated by cAMP and subunit assembly. Forms a stable complex with KCNE1 or KCNE2, and that this heteromultimerization regulates inward rectifier potassium channel activity. The chain is Voltage-gated inwardly rectifying potassium channel KCNH2 from Rattus norvegicus (Rat).